Consider the following 347-residue polypeptide: MNIKVAIVGASGYAGGEILRLLLQHPLYLSGQLSIGALMGSSTVGQTVSELMPHLPELSDRVVEPTDVETLKSHDVVFLALPHGFSAEIAQQLPAEITVIDCAADFRLKDQKDWDAYYGGKHAGSWPYGIPEMPGHRDLIASSKRIAVPGCFPTGATLALLPAIAAHIIEPDVSVVSITGVSGAGKKASVAMLGAETMGSLKAYNVAGKHRHTPEISQNLSEYADQKIVVSFTPVLAPLPRGILTTATAKLTSGITLDEIREIYLNAYENEPFVHILPSGQQPQTQAVVGSNMCHIQVDADDNSKKLVVTSAIDNLTKGTAGAAVQCMNLSLGVSETSGLPCGGVAP.

Cys151 is an active-site residue.

It belongs to the NAGSA dehydrogenase family. Type 1 subfamily.

The protein localises to the cytoplasm. It catalyses the reaction N-acetyl-L-glutamate 5-semialdehyde + phosphate + NADP(+) = N-acetyl-L-glutamyl 5-phosphate + NADPH + H(+). Its pathway is amino-acid biosynthesis; L-arginine biosynthesis; N(2)-acetyl-L-ornithine from L-glutamate: step 3/4. In terms of biological role, catalyzes the NADPH-dependent reduction of N-acetyl-5-glutamyl phosphate to yield N-acetyl-L-glutamate 5-semialdehyde. The chain is N-acetyl-gamma-glutamyl-phosphate reductase from Corynebacterium diphtheriae (strain ATCC 700971 / NCTC 13129 / Biotype gravis).